A 425-amino-acid chain; its full sequence is Septin-11 (425 aa).

Ala-2 carries the post-translational modification N-acetylalanine. Position 9 is a phosphoserine (Ser-9). A Septin-type G domain is found at 38-304 (QGFCFNILCV…ELYRRCKLEE (267 aa)). The tract at residues 48–55 (GETGIGKS) is G1 motif. GTP is bound by residues 48-55 (GETGIGKS), Gly-103, 184-192 (KADTIAKNE), Gly-238, and Arg-253. The G3 motif stretch occupies residues 100–103 (DTVG). A G4 motif region spans residues 183–186 (AKAD). Residues 320–410 (QETYEAKRNE…AAQLLQSQAQ (91 aa)) are a coiled coil. The segment at 399-425 (KAAAQLLQSQAQQSGAQQTKKDKDKKN) is disordered. A compositionally biased stretch (low complexity) spans 401 to 416 (AAQLLQSQAQQSGAQQ).

Belongs to the TRAFAC class TrmE-Era-EngA-EngB-Septin-like GTPase superfamily. Septin GTPase family. In terms of assembly, septins polymerize into heterooligomeric protein complexes that form filaments, and can associate with cellular membranes, actin filaments and microtubules. Forms homooligomers. GTPase activity is required for filament formation. Interacts with SEPTIN7, SEPTIN9 and SEPTIN12.

The protein resides in the cytoplasm. It is found in the cytoskeleton. The protein localises to the synapse. It localises to the cell projection. Its subcellular location is the dendritic spine. The protein resides in the axon. Filament-forming cytoskeletal GTPase. May play a role in cytokinesis (Potential). May play a role in the cytoarchitecture of neurons, including dendritic arborization and dendritic spines, and in GABAergic synaptic connectivity. This is Septin-11 from Bos taurus (Bovine).